An 88-amino-acid polypeptide reads, in one-letter code: Large ribosomal subunit protein bL27 (88 aa).

Residues Met-1–Leu-21 are disordered.

Belongs to the bacterial ribosomal protein bL27 family.

This is Large ribosomal subunit protein bL27 from Methylobacterium nodulans (strain LMG 21967 / CNCM I-2342 / ORS 2060).